The sequence spans 382 residues: MSLKEKTQSLFANAFGYPATRTIQAPGRVNLIGEHTDYNDGFVLPCAIDYQTVISCAPRDDRKVRVMAADYENQLDEFSLDAPIVAHENYQWANYVRGVVKHLQLRNNSFGGVDMVISGNVPQGAGLSSSASLEVAVGTVLQQLYHLPLDGAQIALNGQEAENQFVGCNCGIMDQLISALGKKDHALLIDCRSLGTKAVSMPKGVAVVIINSNFKRTLVGSEYNTRREQCETGARFFQQPALRDVTIEEFNAVAHELDPIVAKRVRHILTENARTVEAASALEQGDLKRMGELMAESHASMRDDFEITVPQIDTLVEIVKAVIGDKGGVRMTGGGFGGCIVALIPEELVPAVQQAVAEQYEAKTGIKETFYVCKPSQGAGQC.

A substrate-binding site is contributed by 34-37; that stretch reads EHTD. ATP is bound at residue 124–130; it reads GAGLSSS. Mg(2+) is bound by residues S130 and E162. Residue D174 is the Proton acceptor of the active site. Y223 provides a ligand contact to substrate.

It belongs to the GHMP kinase family. GalK subfamily.

It is found in the cytoplasm. It catalyses the reaction alpha-D-galactose + ATP = alpha-D-galactose 1-phosphate + ADP + H(+). The protein operates within carbohydrate metabolism; galactose metabolism. Functionally, catalyzes the transfer of the gamma-phosphate of ATP to D-galactose to form alpha-D-galactose-1-phosphate (Gal-1-P). This is Galactokinase from Escherichia coli O127:H6 (strain E2348/69 / EPEC).